The chain runs to 1147 residues: Tip elongation aberrant protein 1 (1147 aa).

Positions 1 to 16 are enriched in basic residues; the sequence is MSFLFKRNKGSAHKPT. Positions 1–64 are disordered; the sequence is MSFLFKRNKG…TGSGSHITAS (64 aa). Residues 18-32 are compositionally biased toward polar residues; it reads PNFSKTSTTPSTSQL. 6 Kelch repeats span residues 94–144, 146–198, 199–253, 254–303, 305–351, and 355–402; these read EIYI…LIGN, FIVF…CLGS, KICL…TFSD, KLYI…VVEG, LYVF…TLSC, and TLVL…SNST. 2 disordered regions span residues 384–403 and 408–547; these read SVPT…NSTG and SAFN…NAQS. 3 stretches are compositionally biased toward polar residues: residues 385–403, 408–465, and 472–489; these read VPTT…NSTG, SAFN…SNDL, and TRSN…LNSH. Positions 502–512 are enriched in low complexity; it reads SSLNSQQLSNQ. The residue at position 503 (S503) is a Phosphoserine. Polar residues predominate over residues 519–547; sequence VSPTLSFVPSSHSMEQGNGSVASANNAQS. The segment at 538–1147 is interaction with tea4; sequence SVASANNAQS…AKEPVHDNEN (610 aa). 4 coiled-coil regions span residues 611-649, 716-838, 879-990, and 1084-1105; these read KLYE…LEKV, QTSS…IIDA, KNNE…ALEE, and IKSL…AKEK. Residues 948-1147 form a retention at microtubule cell ends region; the sequence is KALEQRNTGA…AKEPVHDNEN (200 aa).

In terms of assembly, major component of the tea1 cell-end complex. Interacts with rax2, tea4 and tip1. Interacts with for3 in the presence of tea4.

Its subcellular location is the cytoplasm. The protein resides in the cytoskeleton. Cell polarity protein. Acts as an end marker, directing the growth machinery to the cell poles. Involved in the regulation of microtubular organization, affecting the maintenance of a single central axis. Prevents the curling of microtubule tips around the cell ends and is required for the retention of polarity factors such as pom1, tip1 and tea2 at the cell ends, necessary for the cell to grow in a straight line. Links tip1 and tea4 in a common complex. This Schizosaccharomyces pombe (strain 972 / ATCC 24843) (Fission yeast) protein is Tip elongation aberrant protein 1 (tea1).